Consider the following 176-residue polypeptide: ATP-dependent protease subunit HslV (176 aa).

Residue T2 is part of the active site. Residues G157, C160, and T163 each coordinate Na(+).

This sequence belongs to the peptidase T1B family. HslV subfamily. A double ring-shaped homohexamer of HslV is capped on each side by a ring-shaped HslU homohexamer. The assembly of the HslU/HslV complex is dependent on binding of ATP.

It is found in the cytoplasm. It catalyses the reaction ATP-dependent cleavage of peptide bonds with broad specificity.. With respect to regulation, allosterically activated by HslU binding. Protease subunit of a proteasome-like degradation complex believed to be a general protein degrading machinery. This Pectobacterium carotovorum subsp. carotovorum (strain PC1) protein is ATP-dependent protease subunit HslV.